The primary structure comprises 864 residues: Dynamin-1 (864 aa).

The 267-residue stretch at 28–294 (DLDLPQIAVV…LTNHIRDTLP (267 aa)) folds into the Dynamin-type G domain. A G1 motif region spans residues 38–45 (GGQSAGKS). 7 residues coordinate GDP: serine 41, glycine 43, lysine 44, serine 45, serine 46, arginine 59, and glycine 60. The G2 motif stretch occupies residues 64–66 (VTR). Position 80 is a phosphotyrosine (tyrosine 80). Tyrosine 125 bears the 3'-nitrotyrosine; alternate mark. Phosphotyrosine; alternate is present on tyrosine 125. The tract at residues 136-139 (DLPG) is G3 motif. Positions 205-208 (TKLD) are G4 motif. Residues lysine 206, aspartate 208, aspartate 211, asparagine 236, arginine 237, and glutamine 239 each coordinate GDP. A G5 motif region spans residues 235–238 (VNRS). Phosphoserine is present on residues serine 306 and serine 347. Residue tyrosine 354 is modified to Phosphotyrosine. Serine 512 is subject to Phosphoserine. Residues 519 to 625 (LVIRKGWLTI…WKASFLRAGV (107 aa)) form the PH domain. One can recognise a GED domain in the interval 659–750 (VETIRNLVDS…IIGDINTTTV (92 aa)). Positions 767–864 (SVPAGRRSPT…PESPRPPFDL (98 aa)) are disordered. The residue at position 774 (serine 774) is a Phosphoserine; by CDK5. The residue at position 778 (serine 778) is a Phosphoserine. The residue at position 796 (arginine 796) is an Omega-N-methylarginine. Serine 822 carries the phosphoserine modification. The segment covering 825–843 (PFGPPPQVPSRPNRAPPGV) has biased composition (pro residues). Phosphoserine is present on residues serine 851 and serine 857.

Belongs to the TRAFAC class dynamin-like GTPase superfamily. Dynamin/Fzo/YdjA family. Homodimer; homodimerization is mediated by the dynamin-type G domain which promotes assembly-stimulated GTPase activity. Homo-tetramer formed from two dimers in the absence of lipid. Oligomerizes into a helical polymer that self-assembles around the vesicle membrane, when associated to the menbrane through lipid binding. Interacts (via C-terminal proline-rich domain (PRD)) with SNX9 (via SH3 domain); this interaction allows regulation of DNM1 self-assembly during late stages of endocytic vesicle formation and supports DNM1's early functions in accelerating clathrin-coated pits (CCPs) maturation in non neuronals cell. Interacts (via C-terminal proline-rich domain (PRD)) with MYO1E (via SH3 domain); this interaction regulates receptor-mediated endocytosis. Interacts with SNX33 (via SH3 domain); this interaction decreases DNM1-dependent endocytosis. Interacts with DIAPH1. Interacts with GRB2 (via SH3 domain); this interaction mediates disassembly of DNM1 polymers, therefore modulates self-assembly. Forms a complex with BIN1 (via SH3 domain) and SH3GL2 (via SH3 domain). Forms a complex with SH3GL2 (via SH3 domain) and AMPH (via SH3 domain). Forms a complex with SH3GL2 (via SH3 domain) and SYNJ1. Interacts with AMPH. Interacts (via C-terminal proline-rich domain (PRD)) with SYT1; this interaction facilitates vesicle fission during clathrin-mediated endocytosis (CME). Interacts (via C-terminal proline-rich domain (PRD)) with PLCG1 (via SH3 domain); this interaction stimulates the release of GDP from DNM1 and enhances DNM1-dependent endocytosis. Interacts with SNPH; this interaction inhibits the binding of DNM1 to AMPH and DNM1-receptor-mediated endocytosis. Interacts with CAV1. Interacts with SH3GLB1 (via SH3 domain). Interacts with PACSIN1 (via SH3 domain), PACSIN2 (via SH3 domain) and PACSIN3 (via SH3 domain). Interacts with UNC119; this interaction decreases DNM1's GTPase activity and affects DNM1's interaction with AMPH. Interacts (GTP-bound form) with DNAJC6; this interaction allows clathrin-coated vesicle (CCV) formation at the plasma membrane. Phosphorylation at Ser-774 by GSK3B/GSK3-beta leads to inactivation of receptor-mediated endocytosis in non-neuronal cells. Dephosphorylation at Ser-774, through the EGFR downstream signaling, leads to activation and regulates early stages of clathrin-mediated endocytosis (CME). Phosphorylated by CDK5 leading to synaptic vesicle endocytosis (SVE) activation. Brain-specific (peripheral sensory neurons).

The protein localises to the cytoplasmic vesicle. Its subcellular location is the clathrin-coated vesicle. It localises to the golgi apparatus. The protein resides in the cell membrane. It is found in the membrane. The protein localises to the clathrin-coated pit. Its subcellular location is the presynapse. It localises to the secretory vesicle. The protein resides in the chromaffin granule. The catalysed reaction is GTP + H2O = GDP + phosphate + H(+). Its function is as follows. Catalyzes the hydrolysis of GTP and utilizes this energy to mediate vesicle scission and participates in many forms of endocytosis, such as clathrin-mediated endocytosis or synaptic vesicle endocytosis as well as rapid endocytosis (RE). Associates to the membrane, through lipid binding, and self-assembles into rings and stacks of interconnected rings through oligomerization to form a helical polymer around the vesicle membrane leading to constriction of invaginated coated pits around their necks. Self-assembly of the helical polymer induces membrane tubules narrowing until the polymer reaches a length sufficient to trigger GTP hydrolysis. Depending on the curvature imposed on the tubules, membrane detachment from the helical polymer upon GTP hydrolysis can cause spontaneous hemifission followed by complete fission. May play a role in regulating early stages of clathrin-mediated endocytosis in non-neuronal cells through its activation by dephosphorylation via the signaling downstream of EGFR. Controls vesicle size at a step before fission, during formation of membrane pits, at hippocampal synapses. Controls plastic adaptation of the synaptic vesicle recycling machinery to high levels of activity. Mediates rapid endocytosis (RE), a Ca(2+)-dependent and clathrin- and K(+)-independent process in chromaffin cells. Microtubule-associated force-producing protein involved in producing microtubule bundles and able to bind and hydrolyze GTP. Through its interaction with DNAJC6, acts during the early steps of clathrin-coated vesicle (CCV) formation. This is Dynamin-1 (Dnm1) from Rattus norvegicus (Rat).